A 274-amino-acid chain; its full sequence is tRNA-cytidine(32) 2-sulfurtransferase (274 aa).

The short motif at 40 to 45 is the PP-loop motif element; the sequence is SGGKDS. [4Fe-4S] cluster-binding residues include Cys-115, Cys-118, and Cys-206.

It belongs to the TtcA family. As to quaternary structure, homodimer. It depends on Mg(2+) as a cofactor. The cofactor is [4Fe-4S] cluster.

The protein resides in the cytoplasm. The catalysed reaction is cytidine(32) in tRNA + S-sulfanyl-L-cysteinyl-[cysteine desulfurase] + AH2 + ATP = 2-thiocytidine(32) in tRNA + L-cysteinyl-[cysteine desulfurase] + A + AMP + diphosphate + H(+). Its pathway is tRNA modification. In terms of biological role, catalyzes the ATP-dependent 2-thiolation of cytidine in position 32 of tRNA, to form 2-thiocytidine (s(2)C32). The sulfur atoms are provided by the cysteine/cysteine desulfurase (IscS) system. The polypeptide is tRNA-cytidine(32) 2-sulfurtransferase (Pseudomonas aeruginosa (strain LESB58)).